The primary structure comprises 699 residues: Polyribonucleotide nucleotidyltransferase (699 aa).

Mg(2+) is bound by residues D485 and D491. Residues 552–611 enclose the KH domain; the sequence is PRITTIKINPEKIRDVIGKGGAVIRALTEETGTTIELEDDGTVKIASSNGEATKEAIRRI. An S1 motif domain is found at 621–689; sequence GRIYNGKVIR…RQGRVRLSIK (69 aa).

This sequence belongs to the polyribonucleotide nucleotidyltransferase family. In terms of assembly, component of the RNA degradosome, which is a multiprotein complex involved in RNA processing and mRNA degradation. Requires Mg(2+) as cofactor.

The protein localises to the cytoplasm. The catalysed reaction is RNA(n+1) + phosphate = RNA(n) + a ribonucleoside 5'-diphosphate. Its function is as follows. Involved in mRNA degradation. Catalyzes the phosphorolysis of single-stranded polyribonucleotides processively in the 3'- to 5'-direction. This is Polyribonucleotide nucleotidyltransferase from Shewanella sp. (strain MR-7).